The primary structure comprises 331 residues: Probable deacetylase MTH_1194 (331 aa).

H118 functions as the Proton donor/acceptor in the catalytic mechanism. Residues D155, H157, and D244 each contribute to the Zn(2+) site.

It belongs to the histone deacetylase family. The cofactor is Zn(2+).

Functionally, probable deacetylase. This Methanothermobacter thermautotrophicus (strain ATCC 29096 / DSM 1053 / JCM 10044 / NBRC 100330 / Delta H) (Methanobacterium thermoautotrophicum) protein is Probable deacetylase MTH_1194.